The following is a 225-amino-acid chain: Single-pass membrane and coiled-coil domain-containing protein 3 (225 aa).

Residues 62 to 92 (IKENCDLIIQAIMKIQKELQKVDEALKDKLE) are a coiled coil. A helical membrane pass occupies residues 155–175 (IGASLLGSIGVAVLGLGIDMI). Positions 183 to 207 (VEKTQLQAAIKSYEKHLVEFKSASE) form a coiled coil.

It is found in the membrane. The chain is Single-pass membrane and coiled-coil domain-containing protein 3 (SMCO3) from Homo sapiens (Human).